Here is a 100-residue protein sequence, read N- to C-terminus: Large ribosomal subunit protein uL23 (100 aa).

It belongs to the universal ribosomal protein uL23 family. As to quaternary structure, part of the 50S ribosomal subunit. Contacts protein L29, and trigger factor when it is bound to the ribosome.

Functionally, one of the early assembly proteins it binds 23S rRNA. One of the proteins that surrounds the polypeptide exit tunnel on the outside of the ribosome. Forms the main docking site for trigger factor binding to the ribosome. This Pseudoalteromonas atlantica (strain T6c / ATCC BAA-1087) protein is Large ribosomal subunit protein uL23.